The following is a 93-amino-acid chain: Small ribosomal subunit protein uS19 (93 aa).

The protein belongs to the universal ribosomal protein uS19 family.

In terms of biological role, protein S19 forms a complex with S13 that binds strongly to the 16S ribosomal RNA. This chain is Small ribosomal subunit protein uS19, found in Dehalococcoides mccartyi (strain ATCC BAA-2100 / JCM 16839 / KCTC 5957 / BAV1).